The chain runs to 332 residues: NADH-quinone oxidoreductase subunit H (332 aa).

9 consecutive transmembrane segments (helical) span residues 4-24 (FAFF…IFAS), 44-64 (IGPD…MIKL), 78-98 (FIFA…LAAI), 120-140 (VALL…FLGG), 165-185 (VGAL…LVDI), 194-214 (FSWL…ALFI), 255-275 (IAGA…FWII), 279-299 (IMMI…RAAF), and 312-332 (YLIL…TVLL).

The protein belongs to the complex I subunit 1 family. As to quaternary structure, NDH-1 is composed of 14 different subunits. Subunits NuoA, H, J, K, L, M, N constitute the membrane sector of the complex.

It is found in the cell inner membrane. The catalysed reaction is a quinone + NADH + 5 H(+)(in) = a quinol + NAD(+) + 4 H(+)(out). In terms of biological role, NDH-1 shuttles electrons from NADH, via FMN and iron-sulfur (Fe-S) centers, to quinones in the respiratory chain. The immediate electron acceptor for the enzyme in this species is believed to be ubiquinone. Couples the redox reaction to proton translocation (for every two electrons transferred, four hydrogen ions are translocated across the cytoplasmic membrane), and thus conserves the redox energy in a proton gradient. This subunit may bind ubiquinone. This is NADH-quinone oxidoreductase subunit H from Campylobacter jejuni subsp. jejuni serotype O:23/36 (strain 81-176).